A 772-amino-acid polypeptide reads, in one-letter code: Serine/threonine-protein kinase tousled-like 2 (772 aa).

A disordered region spans residues 24–126 (GVSKGPLNSE…SNPLPRRVEQ (103 aa)). The segment covering 29-44 (PLNSESSNQSLCSVGS) has biased composition (polar residues). Over residues 46 to 61 (SDKEVETPEKKQNDQR) the composition is skewed to basic and acidic residues. 6 positions are modified to phosphoserine: serine 73, serine 94, serine 99, serine 115, serine 117, and serine 134. The disordered stretch occupies residues 180 to 208 (QNSPSSTGSGNTEHSCSSQKQISIQHRQT). A required for interaction with TLK1 and DYNLL1/LC8 region spans residues 225–276 (NSDLEKKEGRIDDLLRANCDLRRQIDEQQKMLEKYKERLNRCVTMSKKLLIE). 2 coiled-coil regions span residues 225 to 276 (NSDL…LLIE) and 317 to 347 (AFQN…KRKP). The disordered stretch occupies residues 342 to 385 (LAKRKPPAMGQAPPATNEQKQRKSKTNGAENETPSSGNTELKDT). Over residues 367–380 (TNGAENETPSSGNT) the composition is skewed to polar residues. A coiled-coil region spans residues 403–451 (HEQEEIFKLRLGHLKKEEAEIQAELERLERVRNLHIRELKRIHNEDNSQ). One can recognise a Protein kinase domain in the interval 462-741 (YLLLHLLGRG…VQQLACDPYL (280 aa)). ATP contacts are provided by residues 468 to 476 (LGRGGFSEV) and lysine 491. Aspartate 592 acts as the Proton acceptor in catalysis. At serine 750 the chain carries Phosphoserine; by CHEK1.

It belongs to the protein kinase superfamily. Ser/Thr protein kinase family. Monomer. May form homodimers; homodimerization may enhance autophosphoylation and enzymatic activity. Heterodimer with TLK1. Interacts with YWHAZ; association with 14-3-3 proteins such as YWHAZ regulates subcellular location. May also interact with FEZ1/LZTS1 and FEZ2. Interacts with CHD7 and CHD8. Interacts with DYNLL1/LC8. The cofactor is Mg(2+). Phosphorylated at Ser-750, probably by CHEK1. In terms of processing, autophosphorylated; phosphorylation promotes the assembly of higher order oligomers and enzymatic activity. In terms of tissue distribution, detected in placenta, fetal liver, kidney, pancreas, heart and skeletal muscle. Highly expressed in testis. Detected in spleen, thymus, colon, ovary, small intestine, prostate and peripheral blood leukocytes. Almost undetectable in liver and lung.

It localises to the nucleus. The protein localises to the nucleoplasm. Its subcellular location is the cytoplasm. It is found in the perinuclear region. The protein resides in the cytoskeleton. It catalyses the reaction L-seryl-[protein] + ATP = O-phospho-L-seryl-[protein] + ADP + H(+). The enzyme catalyses L-threonyl-[protein] + ATP = O-phospho-L-threonyl-[protein] + ADP + H(+). With respect to regulation, cell cycle-regulated, with maximal activity in the S-phase. Rapidly and transiently inhibited by phosphorylation following the generation of DNA double-stranded breaks during S-phase, probably by CHEK1, possibly at Ser-750. This inhibition is cell cycle checkpoint- and ATM-dependent. Its function is as follows. Serine/threonine-protein kinase involved in the process of chromatin assembly and probably also DNA replication, transcription, repair, and chromosome segregation. Phosphorylates the chromatin assembly factors ASF1A and ASF1B. Phosphorylation of ASF1A prevents its proteasome-mediated degradation, thereby enhancing chromatin assembly. Negative regulator of amino acid starvation-induced autophagy. The sequence is that of Serine/threonine-protein kinase tousled-like 2 from Homo sapiens (Human).